A 299-amino-acid polypeptide reads, in one-letter code: Acetyl-coenzyme A carboxylase carboxyl transferase subunit beta (299 aa).

One can recognise a CoA carboxyltransferase N-terminal domain in the interval 25–294 (VWTKCTSCEQ…PFVEPELIQE (270 aa)). Zn(2+) contacts are provided by Cys29, Cys32, Cys48, and Cys51. Residues 29 to 51 (CTSCEQVLYRDELKRHLEVCPKC) form a C4-type zinc finger.

It belongs to the AccD/PCCB family. Acetyl-CoA carboxylase is a heterohexamer composed of biotin carboxyl carrier protein (AccB), biotin carboxylase (AccC) and two subunits each of ACCase subunit alpha (AccA) and ACCase subunit beta (AccD). Zn(2+) is required as a cofactor.

It is found in the cytoplasm. The enzyme catalyses N(6)-carboxybiotinyl-L-lysyl-[protein] + acetyl-CoA = N(6)-biotinyl-L-lysyl-[protein] + malonyl-CoA. It participates in lipid metabolism; malonyl-CoA biosynthesis; malonyl-CoA from acetyl-CoA: step 1/1. Its function is as follows. Component of the acetyl coenzyme A carboxylase (ACC) complex. Biotin carboxylase (BC) catalyzes the carboxylation of biotin on its carrier protein (BCCP) and then the CO(2) group is transferred by the transcarboxylase to acetyl-CoA to form malonyl-CoA. The chain is Acetyl-coenzyme A carboxylase carboxyl transferase subunit beta from Histophilus somni (strain 129Pt) (Haemophilus somnus).